Consider the following 296-residue polypeptide: 4-hydroxy-tetrahydrodipicolinate synthase (296 aa).

Position 49 (T49) interacts with pyruvate. Y137 functions as the Proton donor/acceptor in the catalytic mechanism. The active-site Schiff-base intermediate with substrate is K166. I208 serves as a coordination point for pyruvate.

It belongs to the DapA family. As to quaternary structure, homotetramer; dimer of dimers.

It is found in the cytoplasm. It catalyses the reaction L-aspartate 4-semialdehyde + pyruvate = (2S,4S)-4-hydroxy-2,3,4,5-tetrahydrodipicolinate + H2O + H(+). It functions in the pathway amino-acid biosynthesis; L-lysine biosynthesis via DAP pathway; (S)-tetrahydrodipicolinate from L-aspartate: step 3/4. Its function is as follows. Catalyzes the condensation of (S)-aspartate-beta-semialdehyde [(S)-ASA] and pyruvate to 4-hydroxy-tetrahydrodipicolinate (HTPA). In Chlorobium phaeovibrioides (strain DSM 265 / 1930) (Prosthecochloris vibrioformis (strain DSM 265)), this protein is 4-hydroxy-tetrahydrodipicolinate synthase.